The chain runs to 383 residues: Deoxyguanosinetriphosphate triphosphohydrolase-like protein (383 aa).

Residues arginine 62–isoleucine 198 form the HD domain.

This sequence belongs to the dGTPase family. Type 2 subfamily.

This Rickettsia bellii (strain RML369-C) protein is Deoxyguanosinetriphosphate triphosphohydrolase-like protein.